Consider the following 199-residue polypeptide: MSMELDQSLDAIIASKPKGGIRKRRARSNKPKPTKNAKPAVNTASALKSVISEESKIIVSNLPTDVTEAQVKELFVKSIGPCKRVSLAYGPNGRSKGIATIIFSRPGDATRAYEQYEGRLVDGTRKMKVEIILDPSRQLNSLAARVSPASNASATASKNGAKSSKRKTTRRRRTPNRPKKSAEELDKEMDDYFGSNEKE.

Residues 1 to 41 are disordered; the sequence is MSMELDQSLDAIIASKPKGGIRKRRARSNKPKPTKNAKPAV. Positions 19 to 35 are enriched in basic residues; it reads GGIRKRRARSNKPKPTK. One can recognise an RRM domain in the interval 55 to 134; that stretch reads SKIIVSNLPT…RKMKVEIILD (80 aa). Positions 144–199 are disordered; sequence ARVSPASNASATASKNGAKSSKRKTTRRRRTPNRPKKSAEELDKEMDDYFGSNEKE. Polar residues predominate over residues 148–161; it reads PASNASATASKNGA. The span at 163-179 shows a compositional bias: basic residues; that stretch reads SSKRKTTRRRRTPNRPK.

Interacts with rpn15/dss1, mex67 and uap56.

Its subcellular location is the nucleus. Functionally, has a role in the mRNA export process. Interferes with mitotic chromosome segregation when overexpressed. In Schizosaccharomyces pombe (strain 972 / ATCC 24843) (Fission yeast), this protein is mRNA export protein mlo3 (mlo3).